A 198-amino-acid chain; its full sequence is Recombination protein RecR (198 aa).

The segment at 57-72 adopts a C4-type zinc-finger fold; that stretch reads CEKCNTFTEAQICEVC. The Toprim domain occupies 80–175; sequence TLLCVVETPA…AVTRLARGVP (96 aa).

This sequence belongs to the RecR family.

Functionally, may play a role in DNA repair. It seems to be involved in an RecBC-independent recombinational process of DNA repair. It may act with RecF and RecO. The protein is Recombination protein RecR of Burkholderia ambifaria (strain MC40-6).